The following is a 128-amino-acid chain: Holin-like protein CidA (128 aa).

Transmembrane regions (helical) follow at residues 23 to 43 (LIVEVLHINIPGSILGIIVIF), 58 to 78 (IGALWLLAELLLFFVPSAVGI), and 84 to 104 (ILAEFGTSIILVVLISTFVVM).

It belongs to the CidA/LrgA family. CidA subfamily.

It localises to the cell membrane. Functionally, increases the activity of extracellular murein hydrolases possibly by mediating their export via hole formation. Inhibited by the antiholin-like proteins LrgAB. In an unstressed cell, the LrgAB products probably inhibit the function of the CidA protein. When a cell is stressed by the addition of antibiotics or by other factors in the environment, CidA possibly oligomerizes within the bacterial cell membrane, creating lesions that disrupt the proton motive force, which in turn results in loss of cell viability. These lesions are also hypothesized to regulate the subsequent cell lysis by either allowing the murein hydrolases access to the cell wall substrate and/or regulating their activity by a possible change in the cell wall pH that results from loss of membrane potential. The chain is Holin-like protein CidA from Bacillus licheniformis (strain ATCC 14580 / DSM 13 / JCM 2505 / CCUG 7422 / NBRC 12200 / NCIMB 9375 / NCTC 10341 / NRRL NRS-1264 / Gibson 46).